The primary structure comprises 194 residues: Fibroblast growth factor 7 (194 aa).

An N-terminal signal peptide occupies residues 1–31 (MRKWILTWILPSLLHRSCFHIICLVGTLSLD). N-linked (GlcNAc...) asparagine glycosylation occurs at asparagine 45.

This sequence belongs to the heparin-binding growth factors family. Interacts with FGFBP1. Interacts with FGFR2. Affinity between fibroblast growth factors (FGFs) and their receptors is increased by heparan sulfate glycosaminoglycans that function as coreceptors.

The protein resides in the secreted. Functionally, plays an important role in the regulation of embryonic development, cell proliferation and cell differentiation. Required for normal branching morphogenesis. Growth factor active on keratinocytes. Possible major paracrine effector of normal epithelial cell proliferation. This Sus scrofa (Pig) protein is Fibroblast growth factor 7 (FGF7).